Reading from the N-terminus, the 632-residue chain is tRNA uridine 5-carboxymethylaminomethyl modification enzyme MnmG (632 aa).

FAD-binding positions include 15-20, Ile-127, and Ser-182; that span reads GAGHAG. An NAD(+)-binding site is contributed by 276 to 290; it reads GPRYCPSIEDKIVRF. Gln-373 provides a ligand contact to FAD.

This sequence belongs to the MnmG family. Homodimer. Heterotetramer of two MnmE and two MnmG subunits. FAD is required as a cofactor.

The protein localises to the cytoplasm. Its function is as follows. NAD-binding protein involved in the addition of a carboxymethylaminomethyl (cmnm) group at the wobble position (U34) of certain tRNAs, forming tRNA-cmnm(5)s(2)U34. The chain is tRNA uridine 5-carboxymethylaminomethyl modification enzyme MnmG from Streptococcus pyogenes serotype M2 (strain MGAS10270).